Reading from the N-terminus, the 154-residue chain is Deoxyuridine 5'-triphosphate nucleotidohydrolase (154 aa).

Substrate is bound by residues 64–66, Asn77, 81–83, and Lys91; these read RSG and TID.

It belongs to the dUTPase family. In terms of assembly, homotrimer. Mg(2+) serves as cofactor.

The catalysed reaction is dUTP + H2O = dUMP + diphosphate + H(+). Its pathway is pyrimidine metabolism; dUMP biosynthesis; dUMP from dCTP (dUTP route): step 2/2. Functionally, this enzyme is involved in nucleotide metabolism: it produces dUMP, the immediate precursor of thymidine nucleotides and it decreases the intracellular concentration of dUTP so that uracil cannot be incorporated into DNA. This is Deoxyuridine 5'-triphosphate nucleotidohydrolase from Mycobacterium bovis (strain BCG / Pasteur 1173P2).